We begin with the raw amino-acid sequence, 79 residues long: Acyl carrier protein (79 aa).

A Carrier domain is found at 2 to 77 (SDIEARVKKI…NAIDYANTHQ (76 aa)). Residue serine 37 is modified to O-(pantetheine 4'-phosphoryl)serine.

It belongs to the acyl carrier protein (ACP) family. 4'-phosphopantetheine is transferred from CoA to a specific serine of apo-ACP by AcpS. This modification is essential for activity because fatty acids are bound in thioester linkage to the sulfhydryl of the prosthetic group.

The protein localises to the cytoplasm. Its pathway is lipid metabolism; fatty acid biosynthesis. In terms of biological role, carrier of the growing fatty acid chain in fatty acid biosynthesis. This chain is Acyl carrier protein, found in Paracidovorax citrulli (strain AAC00-1) (Acidovorax citrulli).